Consider the following 250-residue polypeptide: ATP synthase subunit a (250 aa).

Helical transmembrane passes span 26-46, 84-104, 114-134, 143-163, 193-213, and 216-236; these read FTNASLFMVATVGAAAGFLYL, FFPMVFSLFMFILTANLLGMV, IIVTFALAVFVIGTVILYGFY, LFVPHGVPGALLPLVVAIEII, FVASLSAFGALGIGGAILPLI, and VALTGLEFLVAFLQAYVFAVL.

This sequence belongs to the ATPase A chain family. In terms of assembly, F-type ATPases have 2 components, CF(1) - the catalytic core - and CF(0) - the membrane proton channel. CF(1) has five subunits: alpha(3), beta(3), gamma(1), delta(1), epsilon(1). CF(0) has three main subunits: a(1), b(2) and c(9-12). The alpha and beta chains form an alternating ring which encloses part of the gamma chain. CF(1) is attached to CF(0) by a central stalk formed by the gamma and epsilon chains, while a peripheral stalk is formed by the delta and b chains.

It is found in the cell inner membrane. Key component of the proton channel; it plays a direct role in the translocation of protons across the membrane. This is ATP synthase subunit a from Sinorhizobium medicae (strain WSM419) (Ensifer medicae).